We begin with the raw amino-acid sequence, 149 residues long: Nucleoside diphosphate kinase (149 aa).

Lys-9, Phe-57, Arg-85, Thr-91, Arg-102, and Asn-112 together coordinate ATP. The active-site Pros-phosphohistidine intermediate is His-115.

Belongs to the NDK family. As to quaternary structure, homotetramer. Mg(2+) is required as a cofactor.

The protein localises to the cytoplasm. The enzyme catalyses a 2'-deoxyribonucleoside 5'-diphosphate + ATP = a 2'-deoxyribonucleoside 5'-triphosphate + ADP. The catalysed reaction is a ribonucleoside 5'-diphosphate + ATP = a ribonucleoside 5'-triphosphate + ADP. Its function is as follows. Major role in the synthesis of nucleoside triphosphates other than ATP. The ATP gamma phosphate is transferred to the NDP beta phosphate via a ping-pong mechanism, using a phosphorylated active-site intermediate. The polypeptide is Nucleoside diphosphate kinase (Heliobacterium modesticaldum (strain ATCC 51547 / Ice1)).